The primary structure comprises 216 residues: Large ribosomal subunit protein uL3 (216 aa).

Residues 136–155 form a disordered region; the sequence is GVSISHRSHGSTGQRQDPGK. Gln-151 carries the N5-methylglutamine modification.

It belongs to the universal ribosomal protein uL3 family. In terms of assembly, part of the 50S ribosomal subunit. Forms a cluster with proteins L14 and L19. Methylated by PrmB.

In terms of biological role, one of the primary rRNA binding proteins, it binds directly near the 3'-end of the 23S rRNA, where it nucleates assembly of the 50S subunit. This chain is Large ribosomal subunit protein uL3, found in Rickettsia prowazekii (strain Madrid E).